Reading from the N-terminus, the 388-residue chain is LL-diaminopimelate aminotransferase (388 aa).

Substrate-binding residues include Tyr-16 and Gly-41. Pyridoxal 5'-phosphate is bound by residues Tyr-70, 104-105 (SK), Tyr-129, Asn-179, Tyr-210, and 239-241 (SLS). Residues Lys-105, Tyr-129, and Asn-179 each coordinate substrate. At Lys-242 the chain carries N6-(pyridoxal phosphate)lysine. Arg-250 serves as a coordination point for pyridoxal 5'-phosphate. Position 368 (Arg-368) interacts with substrate.

The protein belongs to the class-I pyridoxal-phosphate-dependent aminotransferase family. LL-diaminopimelate aminotransferase subfamily. In terms of assembly, homodimer. The cofactor is pyridoxal 5'-phosphate.

It carries out the reaction (2S,6S)-2,6-diaminopimelate + 2-oxoglutarate = (S)-2,3,4,5-tetrahydrodipicolinate + L-glutamate + H2O + H(+). It functions in the pathway amino-acid biosynthesis; L-lysine biosynthesis via DAP pathway; LL-2,6-diaminopimelate from (S)-tetrahydrodipicolinate (aminotransferase route): step 1/1. In terms of biological role, involved in the synthesis of meso-diaminopimelate (m-DAP or DL-DAP), required for both lysine and peptidoglycan biosynthesis. Catalyzes the direct conversion of tetrahydrodipicolinate to LL-diaminopimelate. In Nitratidesulfovibrio vulgaris (strain DP4) (Desulfovibrio vulgaris), this protein is LL-diaminopimelate aminotransferase.